The primary structure comprises 193 residues: Molybdopterin synthase catalytic subunit (193 aa).

Residues 118-119 (HR), lysine 134, and 141-143 (KKE) each bind substrate. Positions 159–193 (DRTTTDGTTASSPAPATRPAKGGGCCGSKVRANES) are disordered. Positions 163-178 (TDGTTASSPAPATRPA) are enriched in low complexity.

The protein belongs to the MoaE family. MOCS2B subfamily. In terms of assembly, heterotetramer; composed of 2 small (MOCS2A) and 2 large (MOCS2B) subunits.

The protein resides in the cytoplasm. It carries out the reaction 2 [molybdopterin-synthase sulfur-carrier protein]-C-terminal-Gly-aminoethanethioate + cyclic pyranopterin phosphate + H2O = molybdopterin + 2 [molybdopterin-synthase sulfur-carrier protein]-C-terminal Gly-Gly + 2 H(+). The protein operates within cofactor biosynthesis; molybdopterin biosynthesis. Functionally, catalytic subunit of the molybdopterin synthase complex, a complex that catalyzes the conversion of precursor Z into molybdopterin. Acts by mediating the incorporation of 2 sulfur atoms from thiocarboxylated MOCS2A into precursor Z to generate a dithiolene group. This chain is Molybdopterin synthase catalytic subunit, found in Oryza sativa subsp. indica (Rice).